The following is a 230-amino-acid chain: Probable carboxylesterase Culp2 (230 aa).

A signal peptide (tat-type signal) is located at residues 1–32 (MNDLLTRRLLTMGAAAAMLAAVLLLTPITVPA). Cys45 and Cys112 are joined by a disulfide. The active-site Nucleophile is Ser123. The cysteines at positions 185 and 192 are disulfide-linked. Asp189 is a catalytic residue. The active-site Proton donor/acceptor is the His207.

It belongs to the cutinase family. Predicted to be exported by the Tat system. The position of the signal peptide cleavage has not been experimentally proven.

Its subcellular location is the secreted. The protein localises to the cell surface. This is Probable carboxylesterase Culp2 (cut2) from Mycobacterium bovis (strain ATCC BAA-935 / AF2122/97).